The sequence spans 340 residues: Dihydroorotate dehydrogenase (quinone) (340 aa).

FMN contacts are provided by residues 65–69 and T89; that span reads AGADK. Position 69 (K69) interacts with substrate. Substrate is bound at residue 114 to 118; the sequence is NRNGF. 2 residues coordinate FMN: N142 and N175. N175 lines the substrate pocket. Residue S178 is the Nucleophile of the active site. N180 contributes to the substrate binding site. FMN-binding residues include K220 and T248. 249–250 lines the substrate pocket; sequence NT. FMN is bound by residues G271, G300, and 321 to 322; that span reads YS.

It belongs to the dihydroorotate dehydrogenase family. Type 2 subfamily. As to quaternary structure, monomer. FMN is required as a cofactor.

Its subcellular location is the cell membrane. The catalysed reaction is (S)-dihydroorotate + a quinone = orotate + a quinol. It functions in the pathway pyrimidine metabolism; UMP biosynthesis via de novo pathway; orotate from (S)-dihydroorotate (quinone route): step 1/1. Its function is as follows. Catalyzes the conversion of dihydroorotate to orotate with quinone as electron acceptor. This chain is Dihydroorotate dehydrogenase (quinone), found in Mannheimia succiniciproducens (strain KCTC 0769BP / MBEL55E).